We begin with the raw amino-acid sequence, 397 residues long: MVIKPKIRGFICTNAHPVGCSEHVQEQINYVKQQGALKNAPKNVLVIGASTGYGLASRITAAFGGGAKTLGIFFEKEGTERKTGSAGWYNTAAFQNAADEAGLWSKNINGDAFSNEIKQKAIDTIKADLGKVDLIIYSLASPRRTDPNTGEVFSSTLKPIGNAVTTKNLNTSKREIDEITVEAANQDDIDNTIKVMGGEDWEMWIDALKQADVLADNFKTTAYTYIGKELTWPIYGHATIGKAKEDLDRATAAIKASTSDLNGEAYVSSLNAVVTQASSAIPIMPLYISALFKVMKADGTYEGTIEQIQALFSENLYGDTPRFDEGGHLFQNYKELEDDVQVRIQAIWDKVDTSSIDELTDYVGYHNEFLRLFGFGIQGVDYEQEVDPVQPIANMID.

Residues 48-53, 74-75, 111-112, and 139-140 contribute to the NAD(+) site; these read GASTGY, FE, DA, and LA. Tyrosine 225 contributes to the substrate binding site. Residue tyrosine 235 is the Proton donor of the active site. NAD(+) is bound by residues lysine 244 and 273–275; that span reads VVT.

This sequence belongs to the TER reductase family. Monomer.

It carries out the reaction a 2,3-saturated acyl-[ACP] + NAD(+) = a (2E)-enoyl-[ACP] + NADH + H(+). Its pathway is lipid metabolism; fatty acid biosynthesis. Its function is as follows. Involved in the final reduction of the elongation cycle of fatty acid synthesis (FAS II). Catalyzes the reduction of a carbon-carbon double bond in an enoyl moiety that is covalently linked to an acyl carrier protein (ACP). This chain is Enoyl-[acyl-carrier-protein] reductase [NADH], found in Pseudoalteromonas translucida (strain TAC 125).